A 276-amino-acid chain; its full sequence is 4-hydroxy-3-methylbut-2-enyl diphosphate reductase (276 aa).

Cys12 is a [4Fe-4S] cluster binding site. Residues His36 and His71 each contribute to the (2E)-4-hydroxy-3-methylbut-2-enyl diphosphate site. Dimethylallyl diphosphate contacts are provided by His36 and His71. Residues His36 and His71 each coordinate isopentenyl diphosphate. Cys93 is a [4Fe-4S] cluster binding site. (2E)-4-hydroxy-3-methylbut-2-enyl diphosphate is bound at residue His121. A dimethylallyl diphosphate-binding site is contributed by His121. An isopentenyl diphosphate-binding site is contributed by His121. The active-site Proton donor is Glu123. Position 160 (Thr160) interacts with (2E)-4-hydroxy-3-methylbut-2-enyl diphosphate. Position 188 (Cys188) interacts with [4Fe-4S] cluster. Residues Ser216, Ser217, Asn218, and Ser259 each contribute to the (2E)-4-hydroxy-3-methylbut-2-enyl diphosphate site. Ser216, Ser217, Asn218, and Ser259 together coordinate dimethylallyl diphosphate. The isopentenyl diphosphate site is built by Ser216, Ser217, Asn218, and Ser259.

The protein belongs to the IspH family. [4Fe-4S] cluster is required as a cofactor.

The catalysed reaction is isopentenyl diphosphate + 2 oxidized [2Fe-2S]-[ferredoxin] + H2O = (2E)-4-hydroxy-3-methylbut-2-enyl diphosphate + 2 reduced [2Fe-2S]-[ferredoxin] + 2 H(+). It catalyses the reaction dimethylallyl diphosphate + 2 oxidized [2Fe-2S]-[ferredoxin] + H2O = (2E)-4-hydroxy-3-methylbut-2-enyl diphosphate + 2 reduced [2Fe-2S]-[ferredoxin] + 2 H(+). It functions in the pathway isoprenoid biosynthesis; dimethylallyl diphosphate biosynthesis; dimethylallyl diphosphate from (2E)-4-hydroxy-3-methylbutenyl diphosphate: step 1/1. It participates in isoprenoid biosynthesis; isopentenyl diphosphate biosynthesis via DXP pathway; isopentenyl diphosphate from 1-deoxy-D-xylulose 5-phosphate: step 6/6. Functionally, catalyzes the conversion of 1-hydroxy-2-methyl-2-(E)-butenyl 4-diphosphate (HMBPP) into a mixture of isopentenyl diphosphate (IPP) and dimethylallyl diphosphate (DMAPP). Acts in the terminal step of the DOXP/MEP pathway for isoprenoid precursor biosynthesis. The polypeptide is 4-hydroxy-3-methylbut-2-enyl diphosphate reductase (Nautilia profundicola (strain ATCC BAA-1463 / DSM 18972 / AmH)).